The sequence spans 142 residues: Large ribosomal subunit protein uL13 (142 aa).

This sequence belongs to the universal ribosomal protein uL13 family. In terms of assembly, part of the 50S ribosomal subunit.

This protein is one of the early assembly proteins of the 50S ribosomal subunit, although it is not seen to bind rRNA by itself. It is important during the early stages of 50S assembly. The polypeptide is Large ribosomal subunit protein uL13 (Acholeplasma laidlawii (strain PG-8A)).